Here is a 117-residue protein sequence, read N- to C-terminus: Ribonuclease P protein component (117 aa).

Belongs to the RnpA family. Consists of a catalytic RNA component (M1 or rnpB) and a protein subunit.

The catalysed reaction is Endonucleolytic cleavage of RNA, removing 5'-extranucleotides from tRNA precursor.. Functionally, RNaseP catalyzes the removal of the 5'-leader sequence from pre-tRNA to produce the mature 5'-terminus. It can also cleave other RNA substrates such as 4.5S RNA. The protein component plays an auxiliary but essential role in vivo by binding to the 5'-leader sequence and broadening the substrate specificity of the ribozyme. The sequence is that of Ribonuclease P protein component from Staphylococcus aureus (strain bovine RF122 / ET3-1).